The sequence spans 340 residues: Glycerol-3-phosphate dehydrogenase [NAD(P)+] (340 aa).

Residues Ser11, Trp12, Arg33, and Lys106 each contribute to the NADPH site. Sn-glycerol 3-phosphate contacts are provided by Lys106, Gly137, and Ser139. Residue Ala141 participates in NADPH binding. Lys192, Asp245, Ser255, Arg256, and Asn257 together coordinate sn-glycerol 3-phosphate. Lys192 acts as the Proton acceptor in catalysis. Arg256 contributes to the NADPH binding site. 2 residues coordinate NADPH: Val280 and Glu282.

The protein belongs to the NAD-dependent glycerol-3-phosphate dehydrogenase family.

The protein resides in the cytoplasm. It catalyses the reaction sn-glycerol 3-phosphate + NAD(+) = dihydroxyacetone phosphate + NADH + H(+). It carries out the reaction sn-glycerol 3-phosphate + NADP(+) = dihydroxyacetone phosphate + NADPH + H(+). It participates in membrane lipid metabolism; glycerophospholipid metabolism. Functionally, catalyzes the reduction of the glycolytic intermediate dihydroxyacetone phosphate (DHAP) to sn-glycerol 3-phosphate (G3P), the key precursor for phospholipid synthesis. The sequence is that of Glycerol-3-phosphate dehydrogenase [NAD(P)+] from Bacillus cereus (strain ATCC 10987 / NRS 248).